The sequence spans 556 residues: Amidophosphoribosyltransferase (556 aa).

A propeptide spanning residues 1 to 57 (MCLAVGVGVRAPKHVPQIRRLGRAGRRLRCVTNCALGSCPIVTVQQPGRDFSSPREE) is cleaved from the precursor. The active-site Nucleophile is cysteine 58. In terms of domain architecture, Glutamine amidotransferase type-2 spans 58 to 284 (CGVFGVWAPG…PGELLAIDAD (227 aa)). Cysteine 299 serves as a coordination point for [4Fe-4S] cluster. Mg(2+)-binding residues include serine 346, aspartate 408, and aspartate 409. 3 residues coordinate [4Fe-4S] cluster: cysteine 445, cysteine 501, and cysteine 504.

It in the C-terminal section; belongs to the purine/pyrimidine phosphoribosyltransferase family. The cofactor is Mg(2+). [4Fe-4S] cluster is required as a cofactor.

The catalysed reaction is 5-phospho-beta-D-ribosylamine + L-glutamate + diphosphate = 5-phospho-alpha-D-ribose 1-diphosphate + L-glutamine + H2O. It participates in purine metabolism; IMP biosynthesis via de novo pathway; N(1)-(5-phospho-D-ribosyl)glycinamide from 5-phospho-alpha-D-ribose 1-diphosphate: step 1/2. Functionally, catalyzes the formation of phosphoribosylamine from phosphoribosylpyrophosphate (PRPP) and glutamine. In Mycobacterium leprae (strain TN), this protein is Amidophosphoribosyltransferase.